A 383-amino-acid chain; its full sequence is Probable disease resistance protein At4g19060 (383 aa).

The interval Tyr-36–Ser-84 is disordered. Positions Ser-41–Ser-70 are enriched in polar residues. NB-ARC domains are found at residues Pro-75–His-184 and Val-207–Ala-281. Gly-121–Thr-128 contributes to the ATP binding site.

In terms of biological role, possible disease resistance protein. This is Probable disease resistance protein At4g19060 from Arabidopsis thaliana (Mouse-ear cress).